Here is a 246-residue protein sequence, read N- to C-terminus: NAD-dependent protein deacylase (246 aa).

The 246-residue stretch at 1–246 folds into the Deacetylase sirtuin-type domain; sequence MDLSQARAAL…RGLELLLEDD (246 aa). 21-41 is a binding site for NAD(+); it reads GAGISAESGIPTFRDAQTGHW. Residues tyrosine 66 and arginine 69 each coordinate substrate. 101 to 104 serves as a coordination point for NAD(+); it reads QNVD. Histidine 123 (proton acceptor) is an active-site residue. NAD(+) is bound by residues 191-193, 217-219, and alanine 235; these read GTS and NPE.

It belongs to the sirtuin family. Class III subfamily.

The protein localises to the cytoplasm. The catalysed reaction is N(6)-acetyl-L-lysyl-[protein] + NAD(+) + H2O = 2''-O-acetyl-ADP-D-ribose + nicotinamide + L-lysyl-[protein]. The enzyme catalyses N(6)-succinyl-L-lysyl-[protein] + NAD(+) + H2O = 2''-O-succinyl-ADP-D-ribose + nicotinamide + L-lysyl-[protein]. Functionally, NAD-dependent lysine deacetylase and desuccinylase that specifically removes acetyl and succinyl groups on target proteins. Modulates the activities of several proteins which are inactive in their acylated form. The protein is NAD-dependent protein deacylase of Deinococcus radiodurans (strain ATCC 13939 / DSM 20539 / JCM 16871 / CCUG 27074 / LMG 4051 / NBRC 15346 / NCIMB 9279 / VKM B-1422 / R1).